The sequence spans 750 residues: Photosystem I P700 chlorophyll a apoprotein A1 (750 aa).

Helical transmembrane passes span Val-70–Ala-93, Leu-156–His-179, Leu-195–Leu-219, Ile-291–Tyr-309, Trp-346–Tyr-369, Leu-385–Val-411, Ala-433–His-455, and Phe-531–Leu-549. Residues Cys-573 and Cys-582 each coordinate [4Fe-4S] cluster. The next 2 membrane-spanning stretches (helical) occupy residues His-589–Trp-610 and Leu-664–Phe-686. His-675 contributes to the chlorophyll a' binding site. Positions 683 and 691 each coordinate chlorophyll a. Trp-692 contributes to the phylloquinone binding site. The chain crosses the membrane as a helical span at residues Ala-724–Ala-744.

This sequence belongs to the PsaA/PsaB family. In terms of assembly, the PsaA/B heterodimer binds the P700 chlorophyll special pair and subsequent electron acceptors. PSI consists of a core antenna complex that captures photons, and an electron transfer chain that converts photonic excitation into a charge separation. The eukaryotic PSI reaction center is composed of at least 11 subunits. The cofactor is P700 is a chlorophyll a/chlorophyll a' dimer, A0 is one or more chlorophyll a, A1 is one or both phylloquinones and FX is a shared 4Fe-4S iron-sulfur center..

Its subcellular location is the plastid. It localises to the chloroplast thylakoid membrane. It carries out the reaction reduced [plastocyanin] + hnu + oxidized [2Fe-2S]-[ferredoxin] = oxidized [plastocyanin] + reduced [2Fe-2S]-[ferredoxin]. In terms of biological role, psaA and PsaB bind P700, the primary electron donor of photosystem I (PSI), as well as the electron acceptors A0, A1 and FX. PSI is a plastocyanin-ferredoxin oxidoreductase, converting photonic excitation into a charge separation, which transfers an electron from the donor P700 chlorophyll pair to the spectroscopically characterized acceptors A0, A1, FX, FA and FB in turn. Oxidized P700 is reduced on the lumenal side of the thylakoid membrane by plastocyanin. The protein is Photosystem I P700 chlorophyll a apoprotein A1 of Solanum bulbocastanum (Wild potato).